A 145-amino-acid polypeptide reads, in one-letter code: Succinate dehydrogenase assembly factor 2, mitochondrial (145 aa).

The protein belongs to the SDHAF2 family. As to quaternary structure, interacts with the flavoprotein subunit within the SDH catalytic dimer.

The protein resides in the mitochondrion matrix. Functionally, plays an essential role in the assembly of succinate dehydrogenase (SDH), an enzyme complex (also referred to as respiratory complex II) that is a component of both the tricarboxylic acid (TCA) cycle and the mitochondrial electron transport chain, and which couples the oxidation of succinate to fumarate with the reduction of ubiquinone (coenzyme Q) to ubiquinol. Required for flavinylation (covalent attachment of FAD) of the flavoprotein subunit of the SDH catalytic dimer. The sequence is that of Succinate dehydrogenase assembly factor 2, mitochondrial from Yarrowia lipolytica (strain CLIB 122 / E 150) (Yeast).